The chain runs to 262 residues: Apolipoprotein A-I (262 aa).

The N-terminal stretch at 1-18 (MKFLALALTILLAAATQA) is a signal peptide. A 3 X approximate tandem repeats region spans residues 32–63 (VKVAMMEYMAQVKETGQRSIDLLDDTEFKEYK). A run of 2 repeats spans residues 64-85 (VQLSQSLDNLQQYAQTTSQSLA) and 87-107 (YSEAFGAQLTDAAAAVRAEVM). The 10 X approximate tandem repeats stretch occupies residues 64 to 262 (VQLSQSLDNL…YETISQAMKA (199 aa)). The stretch at 108-118 (KDVEDVRTQLE) is one 3; half-length repeat. 5 consecutive repeat copies span residues 119-140 (PKRAELKEVLDKHIDEYRKKLE), 141-162 (PLIKEIVEQRRTELEAFRVKME), 163-184 (PVVEEMRAKVSTNVEETKAKLM), 185-206 (PIVETVRAKLTERLEELRTLAA), and 207-228 (PYAEEYKEQMFKAVGEVREKVG). One copy of the 9; half-length repeat lies at 229–239 (PLTNDFKGQVG). Repeat 10 spans residues 240-262 (PAAEQAKEKLMDFYETISQAMKA).

This sequence belongs to the apolipoprotein A1/A4/E family.

It is found in the secreted. Participates in the reverse transport of cholesterol from tissues to the liver for excretion by promoting cholesterol efflux from tissues and by acting as a cofactor for the lecithin cholesterol acyltransferase (LCAT). In Salmo trutta (Brown trout), this protein is Apolipoprotein A-I (apoa1).